The primary structure comprises 249 residues: Large ribosomal subunit protein uL30A (249 aa).

It belongs to the universal ribosomal protein uL30 family. In terms of assembly, component of the small ribosomal subunit (SSU). Mature yeast ribosomes consist of a small (40S) and a large (60S) subunit. The 40S small subunit contains 1 molecule of ribosomal RNA (18S rRNA) and at least 33 different proteins. The large 60S subunit contains 3 rRNA molecules (25S, 5.8S and 5S rRNA) and at least 46 different proteins.

The protein localises to the cytoplasm. Its subcellular location is the nucleus. It is found in the nucleolus. Component of the ribosome, a large ribonucleoprotein complex responsible for the synthesis of proteins in the cell. The small ribosomal subunit (SSU) binds messenger RNAs (mRNAs) and translates the encoded message by selecting cognate aminoacyl-transfer RNA (tRNA) molecules. The large subunit (LSU) contains the ribosomal catalytic site termed the peptidyl transferase center (PTC), which catalyzes the formation of peptide bonds, thereby polymerizing the amino acids delivered by tRNAs into a polypeptide chain. The nascent polypeptides leave the ribosome through a tunnel in the LSU and interact with protein factors that function in enzymatic processing, targeting, and the membrane insertion of nascent chains at the exit of the ribosomal tunnel. The chain is Large ribosomal subunit protein uL30A (rlp7) from Schizosaccharomyces pombe (strain 972 / ATCC 24843) (Fission yeast).